The following is a 179-amino-acid chain: MFNGVGWGEVVVLLLIGLFVFGPDRLPKAARDAGRVLRQLRQLANGMRNDLRSELGPEFADLDIRDLHPKTFVRKHLFEDDPVLPPYLTKRTSLDSLLLGDDPPAAPSLTKSSLPRDPAAKDPARPGAEAAVPAAPPGPVSPMLSKVSPSKASAARSVPAQPARSDGPATEVPFDSDAT.

The chain crosses the membrane as a helical span at residues 2–22 (FNGVGWGEVVVLLLIGLFVFG). Residues 98–109 (LLGDDPPAAPSL) are compositionally biased toward low complexity. The disordered stretch occupies residues 98–179 (LLGDDPPAAP…TEVPFDSDAT (82 aa)).

This sequence belongs to the TatB family. In terms of assembly, the Tat system comprises two distinct complexes: a TatABC complex, containing multiple copies of TatA, TatB and TatC subunits, and a separate TatA complex, containing only TatA subunits. Substrates initially bind to the TatABC complex, which probably triggers association of the separate TatA complex to form the active translocon.

The protein resides in the cell membrane. Part of the twin-arginine translocation (Tat) system that transports large folded proteins containing a characteristic twin-arginine motif in their signal peptide across membranes. Together with TatC, TatB is part of a receptor directly interacting with Tat signal peptides. TatB may form an oligomeric binding site that transiently accommodates folded Tat precursor proteins before their translocation. The chain is Sec-independent protein translocase protein TatB from Frankia casuarinae (strain DSM 45818 / CECT 9043 / HFP020203 / CcI3).